A 31-amino-acid polypeptide reads, in one-letter code: Photosystem II reaction center protein T (31 aa).

The chain crosses the membrane as a helical span at residues 3-23 (ALVYTFLLVGTLGIIFFSIFF).

This sequence belongs to the PsbT family. PSII is composed of 1 copy each of membrane proteins PsbA, PsbB, PsbC, PsbD, PsbE, PsbF, PsbH, PsbI, PsbJ, PsbK, PsbL, PsbM, PsbT, PsbY, PsbZ, Psb30/Ycf12, at least 3 peripheral proteins of the oxygen-evolving complex and a large number of cofactors. It forms dimeric complexes.

It localises to the plastid. The protein localises to the chloroplast thylakoid membrane. Its function is as follows. Found at the monomer-monomer interface of the photosystem II (PS II) dimer, plays a role in assembly and dimerization of PSII. PSII is a light-driven water plastoquinone oxidoreductase, using light energy to abstract electrons from H(2)O, generating a proton gradient subsequently used for ATP formation. The protein is Photosystem II reaction center protein T of Bigelowiella natans (Pedinomonas minutissima).